An 871-amino-acid chain; its full sequence is DNA mismatch repair protein MutS (871 aa).

621–628 (GPNMAGKS) provides a ligand contact to ATP.

This sequence belongs to the DNA mismatch repair MutS family.

This protein is involved in the repair of mismatches in DNA. It is possible that it carries out the mismatch recognition step. This protein has a weak ATPase activity. This is DNA mismatch repair protein MutS from Geobacter sulfurreducens (strain ATCC 51573 / DSM 12127 / PCA).